A 153-amino-acid chain; its full sequence is SsrA-binding protein (153 aa).

The protein belongs to the SmpB family.

It localises to the cytoplasm. In terms of biological role, required for rescue of stalled ribosomes mediated by trans-translation. Binds to transfer-messenger RNA (tmRNA), required for stable association of tmRNA with ribosomes. tmRNA and SmpB together mimic tRNA shape, replacing the anticodon stem-loop with SmpB. tmRNA is encoded by the ssrA gene; the 2 termini fold to resemble tRNA(Ala) and it encodes a 'tag peptide', a short internal open reading frame. During trans-translation Ala-aminoacylated tmRNA acts like a tRNA, entering the A-site of stalled ribosomes, displacing the stalled mRNA. The ribosome then switches to translate the ORF on the tmRNA; the nascent peptide is terminated with the 'tag peptide' encoded by the tmRNA and targeted for degradation. The ribosome is freed to recommence translation, which seems to be the essential function of trans-translation. In Cytophaga hutchinsonii (strain ATCC 33406 / DSM 1761 / CIP 103989 / NBRC 15051 / NCIMB 9469 / D465), this protein is SsrA-binding protein.